We begin with the raw amino-acid sequence, 375 residues long: Peptide-N(4)-(N-acetyl-beta-glucosaminyl)asparagine amidase (375 aa).

Residues cysteine 129, cysteine 132, cysteine 163, and cysteine 166 each coordinate Zn(2+). The active-site Nucleophile is the cysteine 189. Residues histidine 219 and aspartate 236 contribute to the active site. Glutamate 239 contributes to the substrate binding site. The tract at residues 345–375 (KIEVSRTHNIPTGRQTGDAEWTKSRGEDGNE) is disordered. A compositionally biased stretch (basic and acidic residues) spans 364 to 375 (EWTKSRGEDGNE).

The protein belongs to the transglutaminase-like superfamily. PNGase family. The cofactor is Zn(2+).

The protein localises to the cytoplasm. It carries out the reaction Hydrolysis of an N(4)-(acetyl-beta-D-glucosaminyl)asparagine residue in which the glucosamine residue may be further glycosylated, to yield a (substituted) N-acetyl-beta-D-glucosaminylamine and a peptide containing an aspartate residue.. Its function is as follows. Specifically deglycosylates the denatured form of N-linked glycoproteins in the cytoplasm and assists their proteasome-mediated degradation. Cleaves the beta-aspartyl-glucosamine (GlcNAc) of the glycan and the amide side chain of Asn, converting Asn to Asp. Prefers proteins containing high-mannose over those bearing complex type oligosaccharides. Can recognize misfolded proteins in the endoplasmic reticulum that are exported to the cytosol to be destroyed and deglycosylate them, while it has no activity toward native proteins. Deglycosylation is a prerequisite for subsequent proteasome-mediated degradation of some, but not all, misfolded glycoproteins. In Debaryomyces hansenii (strain ATCC 36239 / CBS 767 / BCRC 21394 / JCM 1990 / NBRC 0083 / IGC 2968) (Yeast), this protein is Peptide-N(4)-(N-acetyl-beta-glucosaminyl)asparagine amidase (PNG1).